Here is a 238-residue protein sequence, read N- to C-terminus: 2-C-methyl-D-erythritol 4-phosphate cytidylyltransferase (238 aa).

Belongs to the IspD/TarI cytidylyltransferase family. IspD subfamily.

The enzyme catalyses 2-C-methyl-D-erythritol 4-phosphate + CTP + H(+) = 4-CDP-2-C-methyl-D-erythritol + diphosphate. The protein operates within isoprenoid biosynthesis; isopentenyl diphosphate biosynthesis via DXP pathway; isopentenyl diphosphate from 1-deoxy-D-xylulose 5-phosphate: step 2/6. In terms of biological role, catalyzes the formation of 4-diphosphocytidyl-2-C-methyl-D-erythritol from CTP and 2-C-methyl-D-erythritol 4-phosphate (MEP). This chain is 2-C-methyl-D-erythritol 4-phosphate cytidylyltransferase, found in Shewanella amazonensis (strain ATCC BAA-1098 / SB2B).